Consider the following 185-residue polypeptide: uncharacterized protein (185 aa).

This is an uncharacterized protein from Magallana gigas (Pacific oyster).